A 497-amino-acid chain; its full sequence is GTPase-activating protein GYP8 (497 aa).

The region spanning Phe-69–Gln-281 is the Rab-GAP TBC domain.

In Saccharomyces cerevisiae (strain ATCC 204508 / S288c) (Baker's yeast), this protein is GTPase-activating protein GYP8 (GYP8).